The chain runs to 255 residues: Thiazole synthase (255 aa).

Residue Lys96 is the Schiff-base intermediate with DXP of the active site. 1-deoxy-D-xylulose 5-phosphate-binding positions include Gly157, 183 to 184, and 205 to 206; these read AG and NT.

The protein belongs to the ThiG family. As to quaternary structure, homotetramer. Forms heterodimers with either ThiH or ThiS.

The protein resides in the cytoplasm. It carries out the reaction [ThiS sulfur-carrier protein]-C-terminal-Gly-aminoethanethioate + 2-iminoacetate + 1-deoxy-D-xylulose 5-phosphate = [ThiS sulfur-carrier protein]-C-terminal Gly-Gly + 2-[(2R,5Z)-2-carboxy-4-methylthiazol-5(2H)-ylidene]ethyl phosphate + 2 H2O + H(+). It participates in cofactor biosynthesis; thiamine diphosphate biosynthesis. Its function is as follows. Catalyzes the rearrangement of 1-deoxy-D-xylulose 5-phosphate (DXP) to produce the thiazole phosphate moiety of thiamine. Sulfur is provided by the thiocarboxylate moiety of the carrier protein ThiS. In vitro, sulfur can be provided by H(2)S. The chain is Thiazole synthase from Geobacillus sp. (strain WCH70).